Here is a 241-residue protein sequence, read N- to C-terminus: Ribonuclease PH (241 aa).

Phosphate contacts are provided by residues arginine 87 and 125 to 127 (GTR).

It belongs to the RNase PH family. Homohexameric ring arranged as a trimer of dimers.

The catalysed reaction is tRNA(n+1) + phosphate = tRNA(n) + a ribonucleoside 5'-diphosphate. Phosphorolytic 3'-5' exoribonuclease that plays an important role in tRNA 3'-end maturation. Removes nucleotide residues following the 3'-CCA terminus of tRNAs; can also add nucleotides to the ends of RNA molecules by using nucleoside diphosphates as substrates, but this may not be physiologically important. Probably plays a role in initiation of 16S rRNA degradation (leading to ribosome degradation) during starvation. This chain is Ribonuclease PH, found in Salinispora tropica (strain ATCC BAA-916 / DSM 44818 / JCM 13857 / NBRC 105044 / CNB-440).